A 47-amino-acid chain; its full sequence is uncharacterized protein (47 aa).

The disordered stretch occupies residues 22–47 (VGPRTKRANQASPPVGRHSSRLMCPG).

This is an uncharacterized protein from Saccharomyces cerevisiae (strain ATCC 204508 / S288c) (Baker's yeast).